Here is a 265-residue protein sequence, read N- to C-terminus: Shikimate dehydrogenase (NADP(+)) (265 aa).

Residues serine 15–serine 17 and threonine 62 contribute to the shikimate site. Lysine 66 acts as the Proton acceptor in catalysis. Shikimate-binding residues include asparagine 87 and aspartate 102. Residues glycine 125 to alanine 129, asparagine 149 to lysine 154, and leucine 209 each bind NADP(+). Tyrosine 211 is a binding site for shikimate. Position 233 (glycine 233) interacts with NADP(+).

The protein belongs to the shikimate dehydrogenase family. As to quaternary structure, homodimer.

It carries out the reaction shikimate + NADP(+) = 3-dehydroshikimate + NADPH + H(+). Its pathway is metabolic intermediate biosynthesis; chorismate biosynthesis; chorismate from D-erythrose 4-phosphate and phosphoenolpyruvate: step 4/7. Involved in the biosynthesis of the chorismate, which leads to the biosynthesis of aromatic amino acids. Catalyzes the reversible NADPH linked reduction of 3-dehydroshikimate (DHSA) to yield shikimate (SA). This is Shikimate dehydrogenase (NADP(+)) from Legionella pneumophila (strain Lens).